The primary structure comprises 331 residues: Probable protein phosphatase 2C 72 (331 aa).

In terms of domain architecture, PPM-type phosphatase spans 43–324; the sequence is LGSVCSIQGT…DDITVICLFL (282 aa). Positions 78, 79, 268, and 315 each coordinate Mn(2+).

The protein belongs to the PP2C family. It depends on Mg(2+) as a cofactor. Mn(2+) is required as a cofactor.

It catalyses the reaction O-phospho-L-seryl-[protein] + H2O = L-seryl-[protein] + phosphate. The catalysed reaction is O-phospho-L-threonyl-[protein] + H2O = L-threonyl-[protein] + phosphate. The chain is Probable protein phosphatase 2C 72 from Arabidopsis thaliana (Mouse-ear cress).